We begin with the raw amino-acid sequence, 246 residues long: MLINRNIVALFALPFMASATASELSIGAGAAYNESPYRGYNENTKAIPLISYEGDTFYVRQTTLGFILSQSEKNELSLTASWMPLEFDPTDNDDYAMQQLDKRDSTAMAGVAWYHHERWGTVKASAAADVLDNSNGWVGELSVFHKMQIGRLSLTPALGVLYYDENFSDYYYGISESESRRSGLASYSAQDAWVPYVSLTAKYPIGEHVVLMASAGYSELPEEITDSPMIDRNESFTFVTGVSWRF.

Residues 1–21 form the signal peptide; the sequence is MLINRNIVALFALPFMASATA.

Belongs to the MipA/OmpV family.

The protein localises to the cell outer membrane. The chain is Putative outer membrane protein YiaT (yiaT) from Escherichia coli (strain K12).